Consider the following 77-residue polypeptide: Pi/alpha-stichotoxin-Hmg5b (77 aa).

The signal sequence occupies residues 1–21 (MDYQRLLFLFAVAMVITTTVA). A propeptide spanning residues 22–34 (LPKDTALMDGQLQ) is cleaved from the precursor. Cystine bridges form between Cys-40–Cys-73, Cys-42–Cys-66, and Cys-56–Cys-74. Met-52 bears the Methionine sulfoxide; partial mark.

It belongs to the sea anemone type 3 (BDS) potassium channel toxin family. In terms of processing, toxin occurs in two forms in the mucus, Hmg 1b-2 which is not oxidized and Hmg 1b-2 MetOx which is oxidized at Met-52.

It localises to the secreted. The protein resides in the nematocyst. Functionally, the non-oxidized toxin is remarkably non-selective with activity on many different ion channels. Weakly and reversibly inhibits rat and human homomeric ASIC1 (isoform ASIC1a) (IC(50)=4.8 uM, and IC(50)=14.6 uM), and ASIC3 (IC(50)=15.9 uM). Molecular modeling interaction with ASIC1a suggests that this peptide hinders the collapse of acidic pockets and stabilizes nonconducting channels state. It activates several potassium channels including Kv1.1/KCNA1, Kv1.2/KCNA2, and drosophila Shaker IR. It moderately to potently inhibits potassium channels including Kv1.3/KCNA3, Kv1.4/KCNA4, Kv1.5/KCNA5, Kv1.6/KCNA6, Kv2.1/KCNB1, Kv4.2/KCND2, Kv7.1/KCNQ1, Kv7.2/Kv7.3 (KCNQ2/KCNQ3), Kv7.4/KCNQ4, hERG/KCNH2, and C.elegans QKT1. On sodium channels, it moderately to potently inhibits Nav1.1/SCN1A, Nav1.2/SCN2A, Nav1.3/SCN3A, Nav1.4/SCN4A, Nav1.5/SCN5A, Nav1.6/SCN8A, Nav1.7/SCN9A, Nav1.8/SCN10A, and B.germanica BgNav. It also moderately to potently inhibits Cav3.1/CACNA1G, Cav3.2/CACNA1H, and Cav3.3/CACNA1I. Significant shifts in the voltage-current relationship are observed on Kv and Nav, depending on the channel isoform, whereas the toxin does not seem to modulate the voltage-sensor domains of Cav channels, acting mainly as a pore blocker. Does not activate nicotinic acetylcholine receptors (nAChR), but potentiates ACh-elicited current of human alpha-7/CHRNA7 nAChR. Is also able to bind T.californica muscle-type nAChRs. In vivo, causes an excitatory effect in mice behavior. Also shows antihyperalgesic and analgesic activity in the acid-induced muscle pain mice model, and weak anti-inflammatory effect in models of acute local inflammation. Its function is as follows. Forms an oxidized toxin derivative (Hmg 1b-2 MetOx). Able to bind T.californica muscle-type nAChRs (alpha-1-beta-1-delta-epsilon (CHRNA1-CHRNB1-CHRND-CHRNE)). The polypeptide is Pi/alpha-stichotoxin-Hmg5b (Heteractis magnifica (Magnificent sea anemone)).